Consider the following 115-residue polypeptide: NADH-ubiquinone oxidoreductase chain 3 (115 aa).

A run of 3 helical transmembrane segments spans residues 4–24 (ALTL…AFWL), 55–75 (FFLV…LLPL), and 84–104 (LTTM…SLAY).

It belongs to the complex I subunit 3 family. As to quaternary structure, core subunit of respiratory chain NADH dehydrogenase (Complex I) which is composed of 45 different subunits. Interacts with TMEM186. Interacts with TMEM242.

It is found in the mitochondrion inner membrane. The enzyme catalyses a ubiquinone + NADH + 5 H(+)(in) = a ubiquinol + NAD(+) + 4 H(+)(out). Its function is as follows. Core subunit of the mitochondrial membrane respiratory chain NADH dehydrogenase (Complex I) which catalyzes electron transfer from NADH through the respiratory chain, using ubiquinone as an electron acceptor. Essential for the catalytic activity of complex I. This chain is NADH-ubiquinone oxidoreductase chain 3, found in Phoca vitulina (Harbor seal).